Reading from the N-terminus, the 462-residue chain is A-type ATP synthase subunit B (462 aa).

It belongs to the ATPase alpha/beta chains family. As to quaternary structure, has multiple subunits with at least A(3), B(3), C, D, E, F, H, I and proteolipid K(x).

It localises to the cell membrane. Functionally, component of the A-type ATP synthase that produces ATP from ADP in the presence of a proton gradient across the membrane. The B chain is a regulatory subunit. This is A-type ATP synthase subunit B from Methanococcus maripaludis (strain C6 / ATCC BAA-1332).